Here is a 782-residue protein sequence, read N- to C-terminus: Spastin (782 aa).

A disordered region spans residues 1-103 (MVRTKNQSSS…GNAPRGGNSS (103 aa)). Topologically, residues 1–115 (MVRTKNQSSS…KQNLYVVSFP (115 aa)) are cytoplasmic. The segment at 1–212 (MVRTKNQSSS…RAIQPLEMAG (212 aa)) is required for localization to punctate cytoplasmic foci. Residues 8–19 (SSSSSASSSTKS) show a composition bias toward low complexity. The segment covering 25 to 34 (GGTTNRSRSC) has biased composition (polar residues). Low complexity-rich tracts occupy residues 44 to 75 (SKSS…GSSP) and 84 to 93 (TTDADLTPTS). Residues 116-136 (IIFLFNVLRSLIYQLFCIFRY) constitute an intramembrane region (helical). At 137–782 (LYGASTKVIY…WSQDYGDITI (646 aa)) the chain is on the cytoplasmic side. A sufficient for interaction with microtubules and microtubule severing region spans residues 210–782 (MAGNRAGGNY…WSQDYGDITI (573 aa)). The 76-residue stretch at 235-310 (HRRAFEYISK…SMARDRLHFL (76 aa)) folds into the MIT domain. The tract at residues 325–479 (KEQQQKKKSP…GSGSGASTPM (155 aa)) is disordered. Positions 334 to 343 (PQQQPQQQQQ) are enriched in low complexity. Polar residues-rich tracts occupy residues 408 to 426 (NKSQ…STSV) and 447 to 463 (QFSS…RTPI). The required for interaction with microtubules stretch occupies residues 465 to 479 (NNAAGGSGSGASTPM). ATP is bound at residue 547 to 554 (GPPGNGKT).

The protein belongs to the AAA ATPase family. Spastin subfamily. As to quaternary structure, homohexamer. The homohexamer is stabilized by ATP-binding. The homohexamer may adopt a ring conformation through which microtubules pass prior to being severed. Interacts with microtubules. Interacts with atl; may be involved in microtubule dynamics.

The protein resides in the membrane. It localises to the cytoplasm. Its subcellular location is the cytoskeleton. It is found in the microtubule organizing center. The protein localises to the centrosome. The protein resides in the chromosome. It localises to the lipid droplet. It carries out the reaction n ATP + n H2O + a microtubule = n ADP + n phosphate + (n+1) alpha/beta tubulin heterodimers.. Functionally, ATP-dependent microtubule severing protein. Stimulates microtubule minus-end depolymerization and poleward microtubule flux in the mitotic spindle. Regulates microtubule stability in the neuromuscular junction synapse. Involved in lipid metabolism by regulating the size and distribution of lipid droplets. Involved in axon regeneration by regulating microtubule severing. The protein is Spastin of Drosophila grimshawi (Hawaiian fruit fly).